A 422-amino-acid polypeptide reads, in one-letter code: Mannosylglycerate synthase (422 aa).

GDP-alpha-D-mannose contacts are provided by residues 7–11 (PFKEE), glutamine 66, lysine 77, aspartate 101, and 101–102 (DS). (R)-glycerate contacts are provided by residues arginine 132 and 137–140 (AMIT). Positions 164, 193, and 221 each coordinate GDP-alpha-D-mannose.

This sequence belongs to the glycosyltransferase 78 family.

The enzyme catalyses (R)-glycerate + GDP-alpha-D-mannose = (2R)-2-O-(alpha-D-mannosyl)-glycerate + GDP + H(+). It carries out the reaction GDP-alpha-D-glucose + (R)-glycerate = (2R)-2-O-(alpha-D-glucopyranosyl)-glycerate + GDP + H(+). Activity is not dependent on divalent cations, but it is enhanced by Mg(2+). Functionally, involved in the biosynthesis of the compatible solute alpha-D-mannosyl-glycerate (MG). Catalyzes the condensation of GDP-alpha-D-mannose (GDP-Man) with D-glycerate to produce alpha-D-mannosyl-glycerate. Can also use GDP-alpha-D-glucose (GDP-Glc) as sugar donor to produce alpha-D-glucopyranosyl-glycerate (GG). In Selaginella moellendorffii (Spikemoss), this protein is Mannosylglycerate synthase.